We begin with the raw amino-acid sequence, 255 residues long: Leucyl/phenylalanyl-tRNA--protein transferase (255 aa).

Belongs to the L/F-transferase family.

It localises to the cytoplasm. It carries out the reaction N-terminal L-lysyl-[protein] + L-leucyl-tRNA(Leu) = N-terminal L-leucyl-L-lysyl-[protein] + tRNA(Leu) + H(+). The enzyme catalyses N-terminal L-arginyl-[protein] + L-leucyl-tRNA(Leu) = N-terminal L-leucyl-L-arginyl-[protein] + tRNA(Leu) + H(+). The catalysed reaction is L-phenylalanyl-tRNA(Phe) + an N-terminal L-alpha-aminoacyl-[protein] = an N-terminal L-phenylalanyl-L-alpha-aminoacyl-[protein] + tRNA(Phe). Functionally, functions in the N-end rule pathway of protein degradation where it conjugates Leu, Phe and, less efficiently, Met from aminoacyl-tRNAs to the N-termini of proteins containing an N-terminal arginine or lysine. In Burkholderia pseudomallei (strain 668), this protein is Leucyl/phenylalanyl-tRNA--protein transferase.